Consider the following 1072-residue polypeptide: Error-prone DNA polymerase (1072 aa).

It belongs to the DNA polymerase type-C family. DnaE2 subfamily.

Its subcellular location is the cytoplasm. It catalyses the reaction DNA(n) + a 2'-deoxyribonucleoside 5'-triphosphate = DNA(n+1) + diphosphate. Functionally, DNA polymerase involved in damage-induced mutagenesis and translesion synthesis (TLS). It is not the major replicative DNA polymerase. The polypeptide is Error-prone DNA polymerase (Burkholderia pseudomallei (strain K96243)).